Reading from the N-terminus, the 437-residue chain is Na(+)/H(+) antiporter NhaA (437 aa).

Transmembrane regions (helical) follow at residues 29–49 (TAGIILLLSTLLALGLANTAW), 74–94 (LKHWINDGLMTFFFFVIALEL), 111–131 (LPVAAALGGMAAPAGIYLLLV), 139–159 (GWGTVMSTDTAFVIGCLALLG), 168–188 (LFLLSLAIFDDIGAILIVAVG), 196–216 (VALGTGGLGFAFVAGIALLGI), 229–249 (IWLAFDASGVHATLVGVILGL), 307–327 (IALHPWVAFAIMPLFAVSNAG), 341–361 (IAIVVAFVVGKPAGIVLFSFL), 376–396 (WSLLAAGSLLTGIGFTMALFI), and 411–431 (LGVLGASVISAALGFMALTLL).

This sequence belongs to the NhaA Na(+)/H(+) (TC 2.A.33) antiporter family.

It localises to the cell inner membrane. The catalysed reaction is Na(+)(in) + 2 H(+)(out) = Na(+)(out) + 2 H(+)(in). Na(+)/H(+) antiporter that extrudes sodium in exchange for external protons. This Rhizobium meliloti (strain 1021) (Ensifer meliloti) protein is Na(+)/H(+) antiporter NhaA.